Here is a 95-residue protein sequence, read N- to C-terminus: Small ribosomal subunit protein bS21 (95 aa).

Residues Arg55–Arg95 form a disordered region. Over residues Ala78–Ala89 the composition is skewed to gly residues.

It belongs to the bacterial ribosomal protein bS21 family.

This chain is Small ribosomal subunit protein bS21, found in Nitrobacter hamburgensis (strain DSM 10229 / NCIMB 13809 / X14).